Reading from the N-terminus, the 343-residue chain is Aspartate carbamoyltransferase catalytic subunit (343 aa).

Arg-91 and Thr-92 together coordinate carbamoyl phosphate. Lys-119 is a binding site for L-aspartate. Carbamoyl phosphate-binding residues include Arg-141, His-171, and Gln-174. Arg-204 and Arg-259 together coordinate L-aspartate. 2 residues coordinate carbamoyl phosphate: Gly-300 and Pro-301.

Belongs to the aspartate/ornithine carbamoyltransferase superfamily. ATCase family. In terms of assembly, heterododecamer (2C3:3R2) of six catalytic PyrB chains organized as two trimers (C3), and six regulatory PyrI chains organized as three dimers (R2).

The enzyme catalyses carbamoyl phosphate + L-aspartate = N-carbamoyl-L-aspartate + phosphate + H(+). It functions in the pathway pyrimidine metabolism; UMP biosynthesis via de novo pathway; (S)-dihydroorotate from bicarbonate: step 2/3. Catalyzes the condensation of carbamoyl phosphate and aspartate to form carbamoyl aspartate and inorganic phosphate, the committed step in the de novo pyrimidine nucleotide biosynthesis pathway. This is Aspartate carbamoyltransferase catalytic subunit from Burkholderia ambifaria (strain MC40-6).